We begin with the raw amino-acid sequence, 276 residues long: NADPH-dependent 7-cyano-7-deazaguanine reductase (276 aa).

83–85 (IES) provides a ligand contact to substrate. Residue 85–86 (SK) coordinates NADPH. Residue C184 is the Thioimide intermediate of the active site. D191 functions as the Proton donor in the catalytic mechanism. 223–224 (HE) is a binding site for substrate. NADPH is bound at residue 252 to 253 (RG).

The protein belongs to the GTP cyclohydrolase I family. QueF type 2 subfamily. Homodimer.

Its subcellular location is the cytoplasm. The enzyme catalyses 7-aminomethyl-7-carbaguanine + 2 NADP(+) = 7-cyano-7-deazaguanine + 2 NADPH + 3 H(+). Its pathway is tRNA modification; tRNA-queuosine biosynthesis. Its function is as follows. Catalyzes the NADPH-dependent reduction of 7-cyano-7-deazaguanine (preQ0) to 7-aminomethyl-7-deazaguanine (preQ1). The polypeptide is NADPH-dependent 7-cyano-7-deazaguanine reductase (Pseudomonas putida (strain ATCC 700007 / DSM 6899 / JCM 31910 / BCRC 17059 / LMG 24140 / F1)).